Consider the following 333-residue polypeptide: Taste receptor type 2 member 123 (333 aa).

Over 1–14 (MFSQKTNYSHLFTF) the chain is Extracellular. The chain crosses the membrane as a helical span at residues 15–37 (SIIFYVEIVTGILGNGFIALVNI). At 38–57 (MDWLKRRRISTADQILTALA) the chain is on the cytoplasmic side. The helical transmembrane segment at 58–77 (LTRLIYVWSVLICILLLFLC) threads the bilayer. At 78–91 (PHLSMRPEMFTAIG) the chain is on the extracellular side. A helical membrane pass occupies residues 92 to 114 (VIWVVDNHFSIWLATCLGVFYFL). Topologically, residues 115 to 133 (KIASFSNSLFLYLKWRVKK) are cytoplasmic. Residues 134–156 (VVLMIILISLIFLMLNISSLGMY) traverse the membrane as a helical segment. The Extracellular segment spans residues 157-204 (DHFSIDVYEGNMSYNLVDSTHFPRIFLFTNSSKVFLIANSSHVFLPIN). Asn167, Asn186, and Asn195 each carry an N-linked (GlcNAc...) asparagine glycan. The chain crosses the membrane as a helical span at residues 205–227 (SLFMLIPFTVSLVAFFVLFLSLW). The Cytoplasmic portion of the chain corresponds to 228-250 (KHHKKMQVNAKGPRDASTMAHTK). A helical transmembrane segment spans residues 251 to 273 (ALQIGFSFLLLYAIYLLFIITGI). Residues 274-282 (LNLDLMRCI) are Extracellular-facing. The chain crosses the membrane as a helical span at residues 283 to 305 (VILLFDHISGAVFSISHSFVLIL). Over 306-333 (GNSKLRQATLSVLPCLRCRSKDMDTVVF) the chain is Cytoplasmic.

It belongs to the G-protein coupled receptor T2R family. In terms of tissue distribution, expressed in subsets of taste receptor cells of the tongue and palate epithelium and exclusively in gustducin-positive cells. Expressed in the antrum and fundus (part of the stomach), duodenum and in gastric endocrine cells.

It localises to the membrane. In terms of biological role, gustducin-coupled receptor implicated in the perception of bitter compounds in the oral cavity and the gastrointestinal tract. Signals through PLCB2 and the calcium-regulated cation channel TRPM5. This is Taste receptor type 2 member 123 (Tas2r123) from Rattus norvegicus (Rat).